Consider the following 70-residue polypeptide: Translation initiation factor IF-1 (70 aa).

Residues 1–70 form the S1-like domain; it reads MKNDKLFLTG…LKLGRITQRK (70 aa).

This sequence belongs to the IF-1 family. As to quaternary structure, component of the 30S ribosomal translation pre-initiation complex which assembles on the 30S ribosome in the order IF-2 and IF-3, IF-1 and N-formylmethionyl-tRNA(fMet); mRNA recruitment can occur at any time during PIC assembly.

It is found in the cytoplasm. Its function is as follows. One of the essential components for the initiation of protein synthesis. Stabilizes the binding of IF-2 and IF-3 on the 30S subunit to which N-formylmethionyl-tRNA(fMet) subsequently binds. Helps modulate mRNA selection, yielding the 30S pre-initiation complex (PIC). Upon addition of the 50S ribosomal subunit IF-1, IF-2 and IF-3 are released leaving the mature 70S translation initiation complex. This chain is Translation initiation factor IF-1, found in Mycoplasma genitalium (strain ATCC 33530 / DSM 19775 / NCTC 10195 / G37) (Mycoplasmoides genitalium).